Reading from the N-terminus, the 356-residue chain is Tungsten-containing aldehyde ferredoxin oxidoreductase cofactor-modifying protein (356 aa).

In terms of domain architecture, Radical SAM core spans 1–214 (MKYLYLEITS…PIVNELYKIA (214 aa)). [4Fe-4S] cluster-binding residues include cysteine 12, cysteine 16, and cysteine 19.

It belongs to the radical SAM superfamily. It depends on [4Fe-4S] cluster as a cofactor.

Its function is as follows. Involved in the biosynthesis of a molybdopterin-based tungsten cofactor. The chain is Tungsten-containing aldehyde ferredoxin oxidoreductase cofactor-modifying protein (cmo) from Pyrococcus furiosus (strain ATCC 43587 / DSM 3638 / JCM 8422 / Vc1).